A 176-amino-acid chain; its full sequence is Tubulin polymerization-promoting protein family member 3 (176 aa).

A2 is modified (N-acetylalanine). Positions 132–152 (TGSHKERFDESGKGKGIAGRQ) are disordered. Over residues 134-144 (SHKERFDESGK) the composition is skewed to basic and acidic residues.

The protein belongs to the TPPP family. As to expression, expressed in endometrium during the mid-secretory phase (LH + 7) (at protein level).

Its subcellular location is the cytoplasm. The protein localises to the cytoskeleton. Functionally, regulator of microtubule dynamic that has microtubule bundling activity. Required for embryo implantation; possibly by regulating beta-catenin. Also required for decidualization via regulation of beta-catenin. The chain is Tubulin polymerization-promoting protein family member 3 from Homo sapiens (Human).